Consider the following 241-residue polypeptide: Phycocyanobilin:ferredoxin oxidoreductase (241 aa).

Belongs to the HY2 family.

The catalysed reaction is (2R,3Z)-phycocyanobilin + 4 oxidized [2Fe-2S]-[ferredoxin] = biliverdin IXalpha + 4 reduced [2Fe-2S]-[ferredoxin] + 4 H(+). In terms of biological role, catalyzes the four-electron reduction of biliverdin IX-alpha (2-electron reduction at both the A and D rings); the reaction proceeds via an isolatable 2-electron intermediate, 181,182-dihydrobiliverdin. The polypeptide is Phycocyanobilin:ferredoxin oxidoreductase (Prochlorococcus marinus (strain MIT 9515)).